A 426-amino-acid polypeptide reads, in one-letter code: Fatty alcohol:caffeoyl-CoA acyltransferase (426 aa).

Catalysis depends on proton acceptor residues histidine 162 and aspartate 374.

This sequence belongs to the plant acyltransferase family. Expressed in the outermost circumference of mature roots, the endodermis of young roots and in the seed coat of developing seeds. Expressed in outer integument layer 1 of the seed coat.

Its function is as follows. Involved in the synthesis of alkyl hydroxycinnamates in root waxes. Functions as a fatty alcohol:hydroxy cinnamoyl-CoA acyltransferase with apparent preference for caffeoyl-CoA. The sequence is that of Fatty alcohol:caffeoyl-CoA acyltransferase from Arabidopsis thaliana (Mouse-ear cress).